Reading from the N-terminus, the 200-residue chain is NAD(P)H dehydrogenase (quinone) (200 aa).

A Flavodoxin-like domain is found at 4–191; that stretch reads VLVLYYSSYG…DIARYQGKHV (188 aa). FMN contacts are provided by residues 10–15 and 79–81; these read SSYGHV and TRF. An NAD(+)-binding site is contributed by Tyr12. Trp99 is a binding site for substrate. FMN is bound by residues 114–120 and His135; that span reads STGTQHG.

This sequence belongs to the WrbA family. The cofactor is FMN.

It carries out the reaction a quinone + NADH + H(+) = a quinol + NAD(+). The enzyme catalyses a quinone + NADPH + H(+) = a quinol + NADP(+). This is NAD(P)H dehydrogenase (quinone) from Burkholderia cenocepacia (strain HI2424).